A 632-amino-acid polypeptide reads, in one-letter code: MEEVDRILIHSLRSCGTEVPEDIQSIRQFNTELIVEAVVRCLRVINPSLGATLSHVLPPGMSAQFRIGTSLAQACQDLGYSSEVGYQTFLYSSEPDIRALLIFLAEKLPRDSSEDAHQPAGKSALLQREIVATIKQQLSLPWLPLSCRIAALRRSQSSCRLHRFHSQPLSLASDPALKSIPNERKEYWQRYLPSVTSQLPHLPSVAASLLERNTSKLSAVQEWEAEWKSQGLASRLSPEDYRSKKQQRLQKRIQEQLRQCAQLLAENHLPSSSSQDLTDMLRAFNLDGGSDQKKGSRFTRTQRFTYQQDPHTLKEQMQRAAEILPKKDAQDADAEQQEISSLQEQIDSIEQEIRGLSESNKLLQLTIGQVEGEVNDMHQSCEEKANVVRVKKRAVELLPDADNNLDKLQTLVDASAQRMANLIGQWESHQARLSDEYMELNRVQQEQEDESSRWMKDAKDLYEKIQGSADEAKRKEELYKQLLSEYESLPKEVSRAAYTQRILEIVSNIKKQKEEITKILSDTKELQKEINNLTGKVDRTFVVTDELVFKDAKKDEPVRKAYKYLAALHENCSQLIQTIEDTGTILREIRDLEEQIETETTKKTLSNLQKILEDYRAIKQENAQLLARTREA.

Coiled-coil stretches lie at residues 243-269 (SKKQ…ENHL), 326-367 (KKDA…QLTI), 400-540 (DADN…VDRT), and 584-628 (TILR…LLAR).

This sequence belongs to the CCDC22 family.

The protein localises to the endosome. It is found in the cytoplasm. Its subcellular location is the cytoskeleton. The protein resides in the microtubule organizing center. It localises to the centrosome. May be involved in regulation of NF-kappa-B signaling. May be involved in copper-dependent atp7a trafficking between the trans-Golgi network and vesicles in the cell periphery. The sequence is that of Coiled-coil domain-containing protein 22 (ccdc22) from Xenopus laevis (African clawed frog).